The chain runs to 507 residues: ATP synthase subunit alpha, chloroplastic (507 aa).

An ATP-binding site is contributed by 170 to 177 (GDRQTGKT). Disordered regions lie at residues 278 to 325 (PRRP…TQAG), 392 to 430 (EPEA…APLP), and 452 to 471 (GQVQ…NKPE). Over residues 282–303 (PGREAHPGDVPHLHPRPPERAA) the composition is skewed to basic and acidic residues. The segment covering 305 to 322 (LSSQPGEGSTTASPTVET) has biased composition (polar residues).

This sequence belongs to the ATPase alpha/beta chains family. F-type ATPases have 2 components, CF(1) - the catalytic core - and CF(0) - the membrane proton channel. CF(1) has five subunits: alpha(3), beta(3), gamma(1), delta(1), epsilon(1). CF(0) has four main subunits: a, b, b' and c.

Its subcellular location is the plastid. The protein resides in the chloroplast thylakoid membrane. The catalysed reaction is ATP + H2O + 4 H(+)(in) = ADP + phosphate + 5 H(+)(out). Produces ATP from ADP in the presence of a proton gradient across the membrane. The alpha chain is a regulatory subunit. This is ATP synthase subunit alpha, chloroplastic from Selaginella uncinata (Blue spike-moss).